Reading from the N-terminus, the 452-residue chain is Probable cysteine protease RD21C (452 aa).

An N-terminal signal peptide occupies residues 1–29 (MATSIKSITLALLIFSVLLISLSLGSVTA). The propeptide at 30 to 128 (TETTRNEAEA…EKYLYKVGDS (99 aa)) is activation peptide. A glycan (N-linked (GlcNAc...) asparagine) is linked at Asn-82. Disulfide bonds link Cys-150-Cys-192, Cys-184-Cys-226, Cys-284-Cys-335, Cys-363-Cys-375, and Cys-369-Cys-390. Cys-153 is a catalytic residue. Active-site residues include His-290 and Asn-310. Residues 346-452 (KSSGSNPPKP…KSTNMLVGSA (107 aa)) constitute a propeptide, removed in mature form.

The protein belongs to the peptidase C1 family. In terms of assembly, interacts with WSCP.

In terms of biological role, probable thiol protease. This is Probable cysteine protease RD21C from Arabidopsis thaliana (Mouse-ear cress).